A 194-amino-acid chain; its full sequence is Probable nicotinate-nucleotide adenylyltransferase (194 aa).

It belongs to the NadD family.

The enzyme catalyses nicotinate beta-D-ribonucleotide + ATP + H(+) = deamido-NAD(+) + diphosphate. The protein operates within cofactor biosynthesis; NAD(+) biosynthesis; deamido-NAD(+) from nicotinate D-ribonucleotide: step 1/1. Catalyzes the reversible adenylation of nicotinate mononucleotide (NaMN) to nicotinic acid adenine dinucleotide (NaAD). This is Probable nicotinate-nucleotide adenylyltransferase from Chlorobium luteolum (strain DSM 273 / BCRC 81028 / 2530) (Pelodictyon luteolum).